Reading from the N-terminus, the 295-residue chain is Protease HtpX (295 aa).

A run of 2 helical transmembrane segments spans residues 4 to 24 and 41 to 61; these read ILLF…TLSL and SQLL…SLFI. A Zn(2+)-binding site is contributed by histidine 147. Glutamate 148 is an active-site residue. Histidine 151 serves as a coordination point for Zn(2+). 2 helical membrane passes run 158–178 and 199–219; these read VTLA…ARII and IATI…VMWF. Glutamate 224 contacts Zn(2+).

The protein belongs to the peptidase M48B family. Requires Zn(2+) as cofactor.

The protein localises to the cell inner membrane. The chain is Protease HtpX from Pseudomonas fluorescens (strain Pf0-1).